We begin with the raw amino-acid sequence, 368 residues long: Divinyl chlorophyll a/b light-harvesting protein PcbA (368 aa).

6 consecutive transmembrane segments (helical) span residues 27-47 (FIASHIGHTGLICFGAGANTL), 63-83 (GFVVLPHLAGLGIGGIENGVI), 89-109 (MLVVAVFHLIFSAVYAGGAML), 203-223 (VMGGHAFLAFFLSAGAIWHIF), 243-263 (FVLSTSLAGAAFIAFVAAFWA), and 307-327 (LSNFHFYLGFFYLQGHFWHGL).

It belongs to the PsbB/PsbC family. IsiA/Pcb subfamily. As to quaternary structure, the antenna complex consists of divinyl chlorophylls (a and b) and divinyl chlorophyll a/b binding proteins. Forms complexes with PSII, consisting of a PSII dimer and 4 or 8 PcbA subunits. These complexes are also found under conditions of iron-starvation. The cofactor is divinyl chlorophyll a. Requires divinyl chlorophyll b as cofactor.

It is found in the cellular thylakoid membrane. Functionally, the antenna complex functions as a light receptor, it captures and delivers excitation energy to photosystems II. The Prochlorales pcb genes are not related to higher plant LHCs. In Prochlorococcus marinus (strain MIT 9313), this protein is Divinyl chlorophyll a/b light-harvesting protein PcbA (pcbA).